The sequence spans 169 residues: Copper-resistant cuproprotein CopI (169 aa).

The signal sequence occupies residues 1-20 (MIKKTLLVIALTFTVTTAFA). Cu(2+) is bound by residues His98, Cys153, His158, and Met163.

It belongs to the CopI family.

The protein localises to the periplasm. Involved in copper tolerance. Mediates copper tolerance in aerobiosis. May also mediate tolerance under anaerobiosis. Not required for virulence or colonization in the mouse model. The sequence is that of Copper-resistant cuproprotein CopI from Vibrio cholerae serotype O1 (strain ATCC 39315 / El Tor Inaba N16961).